The primary structure comprises 1013 residues: NHS-like protein 3 (1013 aa).

The residue at position 17 (Lys17) is a Phosphoserine. The segment at 20–195 (SAKAESDNRQ…PPGSRDAVRI (176 aa)) is disordered. Over residues 73 to 89 (QHQERQKLSKGGWDHGD) the composition is skewed to basic and acidic residues. Composition is skewed to polar residues over residues 90 to 99 (TQSIQSSQTG) and 106 to 120 (SIYS…SSTA). Position 92 is a phosphoserine (Ser92). Tyr108 carries the post-translational modification Phosphotyrosine. A phosphoserine mark is found at Ser136, Ser143, and Ser159. Thr160 carries the post-translational modification Phosphothreonine. Residues 168 to 178 (VQKELGLRNNR) are compositionally biased toward basic and acidic residues. Ser213 carries the phosphoserine modification. Arg318 is modified (asymmetric dimethylarginine). A phosphoserine mark is found at Ser320, Ser325, Ser328, Ser336, Ser337, Ser339, and Ser340. A disordered region spans residues 330–1013 (RSLGRFSSAS…PGSDPQKKLV (684 aa)). A compositionally biased stretch (low complexity) spans 336 to 361 (SSASSPRPRSRNASSSSDNWSHSQSS). Residues 362–375 (ETIVSDGSTLSSKG) show a composition bias toward polar residues. Phosphoserine occurs at positions 398, 402, and 407. Polar residues predominate over residues 408-427 (TAETSDTASIRSSGQLSGRS). 2 stretches are compositionally biased toward low complexity: residues 484–493 (VGAVSCPPSS) and 515–530 (RTLS…SGTP). At Thr529 the chain carries Phosphothreonine. The residue at position 543 (Ser543) is a Phosphoserine. Residues 564 to 577 (SVSSSLTSLCSSSS) show a composition bias toward low complexity. The residue at position 591 (Thr591) is a Phosphothreonine. Residues 600–614 (PPHPKVPAPFSPPPS) show a composition bias toward pro residues. Position 610 is a phosphoserine (Ser610). Residues 615–633 (KSKSSNQAAPVLAAPAVAP) are compositionally biased toward low complexity. The span at 635-657 (QVSTIDTSPASPSMPQTTLTPAQ) shows a compositional bias: polar residues. A phosphoserine mark is found at Ser667 and Ser671. Composition is skewed to pro residues over residues 668 to 683 (PPPS…PPPT) and 706 to 716 (PSWPPPPPPAP). Over residues 779–795 (PQKDSVGKHSGAPREDS) the composition is skewed to basic and acidic residues. Residues 814 to 829 (GASTGIPNPSPGSSAP) show a composition bias toward polar residues. 3 positions are modified to phosphoserine: Ser838, Ser842, and Ser848. Residues 859 to 873 (ASSLAASESPASALP) are compositionally biased toward low complexity. A phosphoserine mark is found at Ser909, Ser952, and Ser959. A compositionally biased stretch (pro residues) spans 942–961 (KAPPPVARKPSVGVPPPSPS). The segment covering 964 to 975 (RTESLTAPSTNG) has biased composition (polar residues).

Able to directly activate the TNF-NFkappaB signaling pathway. The chain is NHS-like protein 3 (Nhsl3) from Mus musculus (Mouse).